The following is a 449-amino-acid chain: Protein trichome birefringence-like 35 (449 aa).

A helical; Signal-anchor for type II membrane protein membrane pass occupies residues Leu-12–Phe-29. The GDS motif motif lies at Gly-185 to Ser-187. The short motif at Asp-428 to Asn-442 is the DCXHWCLPGXXDXWN motif element.

It belongs to the PC-esterase family. TBL subfamily.

It is found in the membrane. In terms of biological role, may act as a bridging protein that binds pectin and other cell wall polysaccharides. Probably involved in maintaining esterification of pectins. May be involved in the specific O-acetylation of cell wall polymers. The chain is Protein trichome birefringence-like 35 (TBL35) from Arabidopsis thaliana (Mouse-ear cress).